Reading from the N-terminus, the 954-residue chain is MAVQKDSNKSLSPLITQASERHWARLTEVWSEGLANLTAAQQQELKTVLGLSDYIANQLTRSPEWINALFADDLQQVERKLFDAQLREQLASATTEDMAKRLLRRFRNYQMVRFAWRDFLDYASLEESLLDLSALAEALVIGARDWLYKEMCVQYGTPMDKAGNPQPLLILGMGKLGGRELNFSSDIDLIFTFPEHGETVGGRRSLDNQQFFIRMGQRLVNLLDQITVDGFVFRVDMRLRPYGESGPLVVSFSGLEDYYQEQGRDWERYAMVKARSLGPWNHFSDELHSLLRPFVYRRYIDFSAIESLRKMKQLIAQEVRRRQLTDNIKLGAGGIREVEFVVQSFQLIRGGREPSLRQQSLFGAMDTLYSLGQFEYLAVDELKHSYLLLRRVENLLQAIDDKQTQTLPNNALDWARLCYVLDMTNEIDLRTHIEAAMAKIHRHFKATVGGEEGEEKAEHWTAQLWNVQQDDHAINLLAEQQIDDDKLWPLLSRWRETVTKRSIGPRGRETLDKLMPRLLDELLNQPSPSAAFEPVSKVLEQILTRTTYLELLCENPGARQQLVSLCCASPWIAVQLAKFPMLLDELIDPAHLYDTTSLDDYPSELRQYLLRVPEDDMEQQMEALRQFKLSQQLKIAAADVTGVLPVMQVSDHLTFLAEAIIEQVVMQAWQQVAVRHGVPSYLAESSDTGFAVIGYGKLGGIELGYGSDLDLVFLYEAPENMANSLTNGDRPIEVGHFYLKLAQRILHLFSTRTTSGELYEVDMRLRPSGASGLMVSEIARFGEYQAQEAWTWEHQALVRSRFVFGDNSLAVKFSQIRACVLEQSRDKDELKKAVREMRQKMRDHLLKVSEGEFDLKQSPGGITDIEFIAQYLVLANAHEYPELSIWSDNVRIFGVLAELELLPLMSAQHLTQSYCWLRDENHRLTLQQKSGKLAYADVAAHAERILAIYQAILE.

The segment at methionine 1–glutamate 452 is adenylyl removase. Positions glutamate 458–glutamate 954 are adenylyl transferase.

This sequence belongs to the GlnE family. Requires Mg(2+) as cofactor.

The enzyme catalyses [glutamine synthetase]-O(4)-(5'-adenylyl)-L-tyrosine + phosphate = [glutamine synthetase]-L-tyrosine + ADP. The catalysed reaction is [glutamine synthetase]-L-tyrosine + ATP = [glutamine synthetase]-O(4)-(5'-adenylyl)-L-tyrosine + diphosphate. Its function is as follows. Involved in the regulation of glutamine synthetase GlnA, a key enzyme in the process to assimilate ammonia. When cellular nitrogen levels are high, the C-terminal adenylyl transferase (AT) inactivates GlnA by covalent transfer of an adenylyl group from ATP to specific tyrosine residue of GlnA, thus reducing its activity. Conversely, when nitrogen levels are low, the N-terminal adenylyl removase (AR) activates GlnA by removing the adenylyl group by phosphorolysis, increasing its activity. The regulatory region of GlnE binds the signal transduction protein PII (GlnB) which indicates the nitrogen status of the cell. The polypeptide is Bifunctional glutamine synthetase adenylyltransferase/adenylyl-removing enzyme (Shewanella oneidensis (strain ATCC 700550 / JCM 31522 / CIP 106686 / LMG 19005 / NCIMB 14063 / MR-1)).